We begin with the raw amino-acid sequence, 259 residues long: Putative hydro-lyase Rxyl_2409 (259 aa).

The segment at 1–24 (MGAPGAAEARERIRRGEHAGPTAG) is disordered. The segment covering 8–18 (EARERIRRGEH) has biased composition (basic and acidic residues).

This sequence belongs to the D-glutamate cyclase family.

This is Putative hydro-lyase Rxyl_2409 from Rubrobacter xylanophilus (strain DSM 9941 / JCM 11954 / NBRC 16129 / PRD-1).